The sequence spans 379 residues: uncharacterized protein (379 aa).

29–36 (GPLNSGKT) provides a ligand contact to ATP.

Belongs to the archaeal ATPase family.

This is an uncharacterized protein from Methanocaldococcus jannaschii (strain ATCC 43067 / DSM 2661 / JAL-1 / JCM 10045 / NBRC 100440) (Methanococcus jannaschii).